Reading from the N-terminus, the 1116-residue chain is DUB-associated factor 1 (1116 aa).

7 WD repeats span residues 21 to 62 (AHIL…NEPE), 91 to 132 (KNSD…DHDD), 160 to 200 (VHDG…EKMA), 219 to 262 (SMSP…EVIR), 266 to 305 (AHRTNIKVVRTLDDSTRLISTSSDGVINVWDLNCRHDQTT), 387 to 426 (KKYGGILDIALLPNEKLLFSFCTDSNLNVLDLTNNHFSVN), and 428 to 466 (GGFALTRSSLLTNRRHVITENTKGQMQRWDIVSCELLNT). The segment at 578–600 (LDTGYNSESKKNNKDKKRKSTFK) is disordered. The residue at position 668 (serine 668) is a Phosphoserine. Threonine 693 carries the post-translational modification Phosphothreonine. A compositionally biased stretch (polar residues) spans 747 to 776 (ISSQDLPSNNTHNKLRSSENSRANSTSTLE). Disordered regions lie at residues 747–784 (ISSQDLPSNNTHNKLRSSENSRANSTSTLEGNEKKKPE) and 963–994 (FISASDTTESSGNDSSDSSLGNGNEAVSPSTQ). Low complexity predominate over residues 967–987 (SDTTESSGNDSSDSSLGNGNE).

Interacts (via its WD repeats) with ubiquitin.

The protein resides in the cytoplasm. Functionally, ubiquitin-binding protein involved in the resistance to phenanthroline, sanguinarine, nordihydroguaiaretic acid (NDGA), isopropyl (N-3-chloro-phenyl)-carbamate (IPCPC) and guanosine 5'-O-(2-thiodiphosphate). The protein is DUB-associated factor 1 of Saccharomyces cerevisiae (strain ATCC 204508 / S288c) (Baker's yeast).